The chain runs to 465 residues: Azaphilone cluster-specific transcription factor azaR (465 aa).

Positions 1–16 (MSDSRTTTTKNNTTNH) are enriched in low complexity. The interval 1-25 (MSDSRTTTTKNNTTNHKTSRQGPGS) is disordered. The zn(2)-C6 fungal-type DNA-binding region spans 27 to 53 (CEECRRRKLRCDRQPQCQNCVDAGVYC).

It localises to the nucleus. Transcription factor that regulates the expression of the gene cluster that mediates the biosynthesis of azaphilones, a class of fungal metabolites characterized by a highly oxygenated pyrano-quinone bicyclic core and exhibiting a broad range of bioactivities. The polypeptide is Azaphilone cluster-specific transcription factor azaR (Aspergillus niger (strain ATCC 1015 / CBS 113.46 / FGSC A1144 / LSHB Ac4 / NCTC 3858a / NRRL 328 / USDA 3528.7)).